Here is an 874-residue protein sequence, read N- to C-terminus: Ectonucleotide pyrophosphatase/phosphodiesterase family member 3 (874 aa).

Topologically, residues 1–11 (MQSTLNLSTEE) are cytoplasmic. A helical; Signal-anchor for type II membrane protein membrane pass occupies residues 12–30 (PVKRNTVKKYKIICIVLLI). The Extracellular segment spans residues 31 to 874 (LLVAVSLALG…TYLPVFETVI (844 aa)). SMB domains lie at 50–93 (EQGS…VQST) and 94–138 (QIWT…GETS). Cystine bridges form between cysteine 54–cysteine 71, cysteine 58–cysteine 89, cysteine 69–cysteine 82, cysteine 75–cysteine 81, cysteine 98–cysteine 115, cysteine 103–cysteine 133, cysteine 113–cysteine 126, cysteine 119–cysteine 125, cysteine 144–cysteine 190, and cysteine 152–cysteine 364. The short motif at 78–80 (RGD) is the Cell attachment site element. The tract at residues 160–544 (PVILFSMDGF…HGSLNHLLKV (385 aa)) is phosphodiesterase. Residue aspartate 167 coordinates Zn(2+). Lysine 204 serves as a coordination point for ATP. A Zn(2+)-binding site is contributed by threonine 205. Threonine 205 functions as the Nucleophile in the catalytic mechanism. Asparagine 226 contributes to the ATP binding site. The N-linked (GlcNAc...) asparagine glycan is linked to asparagine 236. Aspartate 275 contacts ATP. Asparagine 279 carries an N-linked (GlcNAc...) asparagine glycan. ATP is bound at residue tyrosine 289. Asparagine 290 carries an N-linked (GlcNAc...) asparagine glycan. Residues aspartate 325, histidine 329, aspartate 372, and histidine 373 each contribute to the Zn(2+) site. 6 disulfide bridges follow: cysteine 380–cysteine 477, cysteine 428–cysteine 817, cysteine 561–cysteine 622, cysteine 574–cysteine 678, cysteine 576–cysteine 663, and cysteine 786–cysteine 796. The N-linked (GlcNAc...) asparagine glycan is linked to asparagine 425. A Zn(2+)-binding site is contributed by histidine 482. N-linked (GlcNAc...) asparagine glycosylation is present at asparagine 532. A nuclease region spans residues 581–874 (TNSDLERVNQ…TYLPVFETVI (294 aa)). 3 N-linked (GlcNAc...) asparagine glycosylation sites follow: asparagine 677, asparagine 686, and asparagine 698. Ca(2+) contacts are provided by aspartate 751, aspartate 755, histidine 757, and aspartate 759. N-linked (GlcNAc...) asparagine glycosylation is found at asparagine 770, asparagine 788, and asparagine 820.

Belongs to the nucleotide pyrophosphatase/phosphodiesterase family. Monomer and homodimer. The cofactor is Zn(2+). N-glycosylated. N-glycosylation is necessary for normal transport to the cell membrane, but is not the apical targeting signal.

The protein resides in the cell membrane. The protein localises to the apical cell membrane. Its subcellular location is the secreted. The catalysed reaction is a ribonucleoside 5'-triphosphate + H2O = a ribonucleoside 5'-phosphate + diphosphate + H(+). It catalyses the reaction ATP + H2O = AMP + diphosphate + H(+). The enzyme catalyses CTP + H2O = CMP + diphosphate + H(+). It carries out the reaction GTP + H2O = GMP + diphosphate + H(+). The catalysed reaction is UTP + H2O = UMP + diphosphate + H(+). It catalyses the reaction UDP-N-acetyl-alpha-D-glucosamine + H2O = N-acetyl-alpha-D-glucosamine 1-phosphate + UMP + 2 H(+). The enzyme catalyses P(1),P(3)-bis(5'-adenosyl) triphosphate + H2O = AMP + ADP + 2 H(+). It carries out the reaction P(1),P(4)-bis(5'-adenosyl) tetraphosphate + H2O = AMP + ATP + 2 H(+). The catalysed reaction is P(1),P(5)-bis(5'-adenosyl) pentaphosphate + H2O = adenosine 5'-tetraphosphate + AMP + 2 H(+). It catalyses the reaction P(1),P(4)-bis(5'-guanosyl) tetraphosphate + H2O = GMP + GTP + 2 H(+). The enzyme catalyses Hydrolytically removes 5'-nucleotides successively from the 3'-hydroxy termini of 3'-hydroxy-terminated oligonucleotides.. Functionally, hydrolase that metabolizes extracellular nucleotides, including ATP, GTP, UTP and CTP. Limits mast cells and basophils response during inflammation and during the chronic phases of allergic responses by eliminating extracellular ATP, a signaling molecule activating these cells in an autocrine manner. Metabolizes extracellular ATP in the lumen of the small intestine, and thereby prevents ATP-induced apoptosis of intestinal plasmacytoid dendritic cells. Has a broad specificity and can also hydrolyze UDP-GlcNAc into UMP and GlcNAc-1-phosphate and potentially several other intracellular nucleotide sugars, including UDP-GalNAc, CMP-NeuAc, GDP-Fuc, and UDP-GlcA. Thereby, could modulate glycan biosynthesis and protein glycosylation. Can hydrolyze extracellular dinucleoside polyphosphates, including the vasoactive adenosine polyphosphates as well. In addition, displays an alkaline phosphodiesterase activity in vitro. In Bos taurus (Bovine), this protein is Ectonucleotide pyrophosphatase/phosphodiesterase family member 3 (ENPP3).